The primary structure comprises 269 residues: Regulatory protein RecX (269 aa).

It belongs to the RecX family.

The protein resides in the cytoplasm. Functionally, modulates RecA activity. The protein is Regulatory protein RecX of Lactococcus lactis subsp. cremoris (strain SK11).